A 353-amino-acid chain; its full sequence is Photosystem II D2 protein (353 aa).

At threonine 2 the chain carries N-acetylthreonine. Threonine 2 bears the Phosphothreonine mark. Residues 41–61 (CAYFAVGGWFTGTTFVTSWYT) traverse the membrane as a helical segment. Histidine 118 contributes to the chlorophyll a binding site. A helical transmembrane segment spans residues 125–141 (GFMLRQFELARSVQLRP). Pheophytin a contacts are provided by glutamine 130 and asparagine 143. The helical transmembrane segment at 153 to 166 (VFVSVFLIYPLGQS) threads the bilayer. Histidine 198 provides a ligand contact to chlorophyll a. A helical membrane pass occupies residues 208-228 (AALLCAIHGATVENTLFEDGD). A plastoquinone contacts are provided by histidine 215 and phenylalanine 262. Histidine 215 is a binding site for Fe cation. Position 269 (histidine 269) interacts with Fe cation. Residues 279–295 (GLWMSALGVVGLALNLR) form a helical membrane-spanning segment.

Belongs to the reaction center PufL/M/PsbA/D family. As to quaternary structure, PSII is composed of 1 copy each of membrane proteins PsbA, PsbB, PsbC, PsbD, PsbE, PsbF, PsbH, PsbI, PsbJ, PsbK, PsbL, PsbM, PsbT, PsbX, PsbY, PsbZ, Psb30/Ycf12, at least 3 peripheral proteins of the oxygen-evolving complex and a large number of cofactors. It forms dimeric complexes. The D1/D2 heterodimer binds P680, chlorophylls that are the primary electron donor of PSII, and subsequent electron acceptors. It shares a non-heme iron and each subunit binds pheophytin, quinone, additional chlorophylls, carotenoids and lipids. There is also a Cl(-1) ion associated with D1 and D2, which is required for oxygen evolution. The PSII complex binds additional chlorophylls, carotenoids and specific lipids. is required as a cofactor.

It is found in the plastid. The protein resides in the chloroplast thylakoid membrane. It catalyses the reaction 2 a plastoquinone + 4 hnu + 2 H2O = 2 a plastoquinol + O2. Functionally, photosystem II (PSII) is a light-driven water:plastoquinone oxidoreductase that uses light energy to abstract electrons from H(2)O, generating O(2) and a proton gradient subsequently used for ATP formation. It consists of a core antenna complex that captures photons, and an electron transfer chain that converts photonic excitation into a charge separation. The D1/D2 (PsbA/PsbD) reaction center heterodimer binds P680, the primary electron donor of PSII as well as several subsequent electron acceptors. D2 is needed for assembly of a stable PSII complex. This is Photosystem II D2 protein from Jasminum nudiflorum (Winter jasmine).